Here is a 398-residue protein sequence, read N- to C-terminus: MTDKNNKRLFKVAPLATAIAASLFTVNASAVEWHGYARSGIGMSDNGDQQCINKQAVGRLGNECETYAELDLQQELFNRDGKTFKVETMLSYKSNQDGDYEALNSEDDEIALRQMNVQAKGVLGFAPEATLWAGKRYYQRHDIHHLDLFYWDVSGPGAGIEGIDAGAGKFSAAWTRGYGNINILDFRYSGIQVGASSLEVGLDLAKPRLTDAQKDAGAADDLSTLFTAELSTPIMDGFNKIVFQYGTEGYASPMRNFGGGQWNGTLDKGGKGFRLIDWGVVKPSANIELSYAAMYGVFEDDDMNDDSSFYSISARPAYKWSDYMRTYLEVGYFAADDDGVDSQLDKITIAQAWSAGPSFWARPEIRVFASYINDGEGTPFEGGEDSVLNFGVQMEAWW.

The first 30 residues, 1 to 30 (MTDKNNKRLFKVAPLATAIAASLFTVNASA), serve as a signal peptide directing secretion.

It belongs to the porin LamB (TC 1.B.3) family. Homotrimer formed of three 18-stranded antiparallel beta-barrels, containing three independent channels.

It is found in the cell outer membrane. The enzyme catalyses beta-maltose(in) = beta-maltose(out). Functionally, involved in the transport of maltose and maltodextrins. This is Maltoporin from Hahella chejuensis (strain KCTC 2396).